Reading from the N-terminus, the 680-residue chain is Methionine--tRNA ligase (680 aa).

The short motif at 15–25 (PYANGPVHIGH) is the 'HIGH' region element. Residues Cys-147, Cys-150, Cys-160, and Cys-163 each coordinate Zn(2+). The 'KMSKS' region signature appears at 332–336 (KISTS). An ATP-binding site is contributed by Thr-335. A tRNA-binding domain is found at 578–680 (EFEKLDIRVG…REVKPGSEVK (103 aa)).

This sequence belongs to the class-I aminoacyl-tRNA synthetase family. MetG type 1 subfamily. Homodimer. Requires Zn(2+) as cofactor.

The protein resides in the cytoplasm. The enzyme catalyses tRNA(Met) + L-methionine + ATP = L-methionyl-tRNA(Met) + AMP + diphosphate. Its function is as follows. Is required not only for elongation of protein synthesis but also for the initiation of all mRNA translation through initiator tRNA(fMet) aminoacylation. This Phocaeicola vulgatus (strain ATCC 8482 / DSM 1447 / JCM 5826 / CCUG 4940 / NBRC 14291 / NCTC 11154) (Bacteroides vulgatus) protein is Methionine--tRNA ligase.